A 436-amino-acid polypeptide reads, in one-letter code: Protein VHS2 (436 aa).

The tract at residues M1 to S34 is disordered. Over residues N7–D21 the composition is skewed to basic and acidic residues. 4 positions are modified to phosphoserine: S53, S61, S102, and S172. Disordered regions lie at residues R165–S195, N211–F266, N282–N360, and N389–K436. Residues R171–S183 show a composition bias toward polar residues. Low complexity-rich tracts occupy residues N211–N226, S238–P261, and N282–S299. S299, S301, S303, and S325 each carry phosphoserine. The span at R300–Q312 shows a compositional bias: polar residues. The segment covering T401–K436 has biased composition (low complexity).

This sequence to yeast MFL3.

It localises to the cytoplasm. Can suppress the synthetic lethality of the hal3 sit4 double mutation when overexpressed, suggesting that it is involved in the G1-S transition. This is Protein VHS2 (VHS2) from Saccharomyces cerevisiae (strain ATCC 204508 / S288c) (Baker's yeast).